Here is a 304-residue protein sequence, read N- to C-terminus: uncharacterized protein (304 aa).

The segment covering 226 to 244 (SRNSESSRQSNLNSPNDSV) has biased composition (polar residues). The disordered stretch occupies residues 226–263 (SRNSESSRQSNLNSPNDSVKFNEFNKSNKSTKTNPNNI). Residues 246–262 (FNEFNKSNKSTKTNPNN) are compositionally biased toward low complexity.

This is an uncharacterized protein from Acanthamoeba polyphaga (Amoeba).